Consider the following 883-residue polypeptide: MIPLLLSLLAALVLTQAPAALADDLKEDSSEDRAFRVRIGAAQLRGVLGGALAIPCHVHHLRPPPSRRAAPGFPRVKWTFLSGDREVEVLVARGLRVKVNEAYRFRVALPAYPASLTDVSLVLSELRPNDSGVYRCEVQHGIDDSSDAVEVKVKGVVFLYREGSARYAFSFAGAQEACARIGARIATPEQLYAAYLGGYEQCDAGWLSDQTVRYPIQNPREACYGDMDGYPGVRNYGVVGPDDLYDVYCYAEDLNGELFLGAPPGKLTWEEARDYCLERGAQIASTGQLYAAWNGGLDRCSPGWLADGSVRYPIITPSQRCGGGLPGVKTLFLFPNQTGFPSKQNRFNVYCFRDSAHPSAFSEASSPASDGLEAIVTVTEKLEELQLPQEAVESESRGAIYSIPITEDGGGGSSTPEDPAEAPRTPLESETQSVAPPTGSSEEEGEALEEEERFKDTETPKEEKEQENLWVWPTELSSPLPTGLETEHSLSQVSPPAQAVLQVGASPSPRPPRVHGPTVETLQPPGEGSLTSTPDGAREVGGETGSPELSGVPREREEAGSSSLEDGPSLLPETWAPVGTREVETPSEEKSGRTVLTGTSVQAQPVLPTDSASRGGVAVAPSSGDCIPSPCHNGGTCLEEKEGFRCLCVPGYGGDLCDVGLHFCSPGWEPFQGACYKHFSTRRSWEEAESQCRALGAHLTSICTPEEQDFVNDRYREYQWIGLNDRTIEGDFLWSDGPPLLYENWNPGQPDSYFLSGENCVVMVWHDQGQWSDVPCNYHLSYTCKMGLVSCGPPPQLPLAQIFGRPRLRYAVDTVLRYRCRDGLAQRNLPLIRCQENGLWEAPQISCVPRRPARALRSMTAPEGPRGQLPRQRKALLTPPSSL.

Residues 1–22 (MIPLLLSLLAALVLTQAPAALA) form the signal peptide. An Ig-like V-type domain is found at 35-154 (FRVRIGAAQL…SSDAVEVKVK (120 aa)). 5 disulfides stabilise this stretch: cysteine 56–cysteine 136, cysteine 178–cysteine 249, cysteine 202–cysteine 223, cysteine 276–cysteine 351, and cysteine 300–cysteine 321. The N-linked (GlcNAc...) asparagine glycan is linked to asparagine 129. 2 Link domains span residues 156–251 (VVFL…YCYA) and 256–353 (GELF…YCFR). Residue asparagine 336 is glycosylated (N-linked (GlcNAc...) asparagine). A disordered region spans residues 389–574 (QEAVESESRG…EDGPSLLPET (186 aa)). The residue at position 413 (serine 413) is a Phosphoserine. Serine 413 carries O-linked (Xyl...) (chondroitin sulfate) serine glycosylation. Positions 428 to 440 (ESETQSVAPPTGS) are enriched in polar residues. Residues 441–451 (SEEEGEALEEE) show a composition bias toward acidic residues. A compositionally biased stretch (basic and acidic residues) spans 452-467 (ERFKDTETPKEEKEQE). The GPI-anchor amidated serine moiety is linked to residue serine 622. In terms of domain architecture, EGF-like spans 622–658 (SSGDCIPSPCHNGGTCLEEKEGFRCLCVPGYGGDLCD). 7 disulfide bridges follow: cysteine 626/cysteine 637, cysteine 631/cysteine 646, cysteine 648/cysteine 657, cysteine 692/cysteine 784, cysteine 760/cysteine 776, cysteine 791/cysteine 834, and cysteine 820/cysteine 847. A C-type lectin domain is found at 658–786 (DVGLHFCSPG…NYHLSYTCKM (129 aa)). The Sushi domain maps to 789–849 (VSCGPPPQLP…WEAPQISCVP (61 aa)). Residues 859–883 (MTAPEGPRGQLPRQRKALLTPPSSL) are disordered.

This sequence belongs to the aggrecan/versican proteoglycan family. In terms of assembly, interacts with TNR. In terms of processing, O-glycosylated; contains chondroitin sulfate. As to expression, brain.

Its subcellular location is the secreted. The protein resides in the extracellular space. It is found in the extracellular matrix. The protein localises to the membrane. In terms of biological role, may play a role in the terminally differentiating and the adult nervous system during postnatal development. Could stabilize interactions between hyaluronan (HA) and brain proteoglycans. Isoform 2 may function as a chondroitin sulfate-bearing cell surface receptor. In Rattus norvegicus (Rat), this protein is Brevican core protein (Bcan).